The following is a 602-amino-acid chain: Elongation factor 4 (602 aa).

A tr-type G domain is found at 8–190; that stretch reads DLIRNFSIVA…AIVHRLPPPK (183 aa). GTP is bound by residues 20–25 and 137–140; these read DHGKST and NKID.

It belongs to the TRAFAC class translation factor GTPase superfamily. Classic translation factor GTPase family. LepA subfamily.

It localises to the cell inner membrane. The catalysed reaction is GTP + H2O = GDP + phosphate + H(+). Required for accurate and efficient protein synthesis under certain stress conditions. May act as a fidelity factor of the translation reaction, by catalyzing a one-codon backward translocation of tRNAs on improperly translocated ribosomes. Back-translocation proceeds from a post-translocation (POST) complex to a pre-translocation (PRE) complex, thus giving elongation factor G a second chance to translocate the tRNAs correctly. Binds to ribosomes in a GTP-dependent manner. This is Elongation factor 4 from Cereibacter sphaeroides (strain ATCC 17023 / DSM 158 / JCM 6121 / CCUG 31486 / LMG 2827 / NBRC 12203 / NCIMB 8253 / ATH 2.4.1.) (Rhodobacter sphaeroides).